The chain runs to 59 residues: UPF0509 protein KPN78578_12530 (59 aa).

The protein belongs to the UPF0509 family.

This Klebsiella pneumoniae subsp. pneumoniae (strain ATCC 700721 / MGH 78578) protein is UPF0509 protein KPN78578_12530.